The chain runs to 367 residues: Polyenoic acids biosynthesis gene cluster protein Ba17b (367 aa).

The next 3 membrane-spanning stretches (helical) occupy residues 16–36 (LEVF…LRFY), 50–70 (WLII…IGAV), and 90–110 (LVAF…TEGL). An N-linked (GlcNAc...) asparagine glycan is attached at Asn133. The next 3 helical transmembrane spans lie at 137 to 157 (LVLV…CTPF), 183 to 203 (FPNI…VWGL), and 211 to 231 (LVLV…GGDS). The N-linked (GlcNAc...) asparagine glycan is linked to Asn245. Residues 259–279 (LIIWTVCEPGVYLIAACLLVY) form a helical membrane-spanning segment.

This sequence belongs to the SAT4 family.

The protein resides in the membrane. It functions in the pathway secondary metabolite biosynthesis. Functionally, part of the gene cluster that mediates the biosynthesis of (2Z,4E,6E,10E)-9-hydroxydodeca-2,4,6,10-tetraenoic acid (BAA), (2E,4E,6E,10E)-9-hydroxydodeca-2,4,6,10-tetraenoic acid (BAB), and (2Z,4E,6E)-octa-2,4,6-trienedioic acid (PBA). The highly reducing polyketide synthase Ba17a is sufficent to produce PBA and BAA. The still to be characterized protein Ba17b leads to an increased production of BAA as well as to the production of the new compound BAB. BAA does not possess insecticidal activity against G.mellonella larvae, however, both BAA and BAB increase the growth of Candida albicans and BAA can mitigate the fungicidal effects of fluconazole over C.albicans, suggesting that generalist pathogens such as M.anisopliae, can potentially manipulate the yeast microbiota found in arthropods (and anywhere else) by the activity of compounds as BAA and BAB. The polypeptide is Polyenoic acids biosynthesis gene cluster protein Ba17b (Metarhizium anisopliae (Entomophthora anisopliae)).